The chain runs to 420 residues: Glutamyl-tRNA reductase (420 aa).

Residues 49 to 52 (TCNR), Ser-109, 114 to 116 (EPQ), and Gln-120 contribute to the substrate site. Cys-50 acts as the Nucleophile in catalysis. 189–194 (GAGETI) contributes to the NADP(+) binding site.

It belongs to the glutamyl-tRNA reductase family. Homodimer.

The enzyme catalyses (S)-4-amino-5-oxopentanoate + tRNA(Glu) + NADP(+) = L-glutamyl-tRNA(Glu) + NADPH + H(+). Its pathway is porphyrin-containing compound metabolism; protoporphyrin-IX biosynthesis; 5-aminolevulinate from L-glutamyl-tRNA(Glu): step 1/2. Catalyzes the NADPH-dependent reduction of glutamyl-tRNA(Glu) to glutamate 1-semialdehyde (GSA). The protein is Glutamyl-tRNA reductase of Proteus mirabilis (strain HI4320).